The primary structure comprises 902 residues: Ephrin type-B receptor 1-B (902 aa).

The Eph LBD domain occupies 1–119 (HRVYVEMRFT…FFKKCPSVVQ (119 aa)). Topologically, residues 1–459 (HRVYVEMRFT…KSELREQLPL (459 aa)) are extracellular. Fibronectin type-III domains follow at residues 240-350 (VPSG…TNQA) and 351-448 (APSS…TEED). 3 N-linked (GlcNAc...) asparagine glycosylation sites follow: asparagine 252, asparagine 344, and asparagine 398. The chain crosses the membrane as a helical span at residues 460-480 (IAGSAAAGVVFIVSLVAISIV). Residues 481–902 (CSRKRTYSKE…QISQSPTSIA (422 aa)) lie on the Cytoplasmic side of the membrane. In terms of domain architecture, Protein kinase spans 537–800 (VKIEEVIGAG…EIVNTLDKMI (264 aa)). ATP is bound by residues 543–551 (IGAGEFGEV) and lysine 569. Residue aspartate 662 is the Proton acceptor of the active site. An SAM domain is found at 829 to 893 (SAFTSVDDWL…LNSIQSMRVQ (65 aa)). Positions 900–902 (SIA) match the PDZ-binding motif.

Belongs to the protein kinase superfamily. Tyr protein kinase family. Ephrin receptor subfamily. Heterotetramer upon binding of the ligand. The heterotetramer is composed of an ephrin dimer and a receptor dimer. Oligomerization is probably required to induce biological responses. Post-translationally, phosphorylated. Autophosphorylation is stimulated by ligands. As to expression, expressed in the embryo in the brain and spinal cord and in the first and fourth visceral arches. Most abundant in adult brain, with lower levels in eye, heart, ovary, oviduct, lung and pharynx.

It localises to the cell membrane. Its subcellular location is the early endosome membrane. It is found in the cell projection. The protein localises to the dendrite. It catalyses the reaction L-tyrosyl-[protein] + ATP = O-phospho-L-tyrosyl-[protein] + ADP + H(+). Functionally, receptor tyrosine kinase which binds promiscuously transmembrane ephrin-B family ligands residing on adjacent cells, leading to contact-dependent bidirectional signaling into neighboring cells. The signaling pathway downstream of the receptor is referred to as forward signaling while the signaling pathway downstream of the ephrin ligand is referred to as reverse signaling. May play a role in axon guidance during nervous system development. May also play an important redundant role with other ephrin-B receptors in development and maturation of dendritic spines and synapse formation. More generally, may play a role in targeted cell migration and adhesion. Upon activation by ephrin-B ligands activates the MAPK/ERK and the JNK signaling cascades to regulate cell migration and adhesion respectively. The chain is Ephrin type-B receptor 1-B (ephb1-b) from Xenopus laevis (African clawed frog).